The following is a 307-amino-acid chain: ADP,ATP carrier protein 3 (307 aa).

3 Solcar repeats span residues 10–103, 114–206, and 214–300; these read TNFA…IKLM, KWFA…LKPL, and GSFL…LQMI. Transmembrane regions (helical) follow at residues 12–39, 80–104, 112–132, 182–203, and 217–237; these read FAIN…VKIL, TANV…KLMF, YGKW…LSLL, FMPS…FDSL, and LASF…SYPL. ADP contacts are provided by R85 and K97. Residue R241 coordinates ADP. Positions 241-246 are important for transport activity; the sequence is RRRMMM. Positions 241-246 match the Nucleotide carrier signature motif motif; it reads RRRMMM. Residues 277–297 traverse the membrane as a helical segment; it reads CGANILRSVAGAGVISMYDQL.

It belongs to the mitochondrial carrier (TC 2.A.29) family. In terms of assembly, monomer.

The protein localises to the mitochondrion inner membrane. The enzyme catalyses ADP(in) + ATP(out) = ADP(out) + ATP(in). The matrix-open state (m-state) is inhibited by the membrane-permeable bongkrekic acid (BKA). The cytoplasmic-open state (c-state) is inhibited by the membrane-impermeable toxic inhibitor carboxyatractyloside (CATR). In terms of biological role, ADP:ATP antiporter that mediates import of ADP into the mitochondrial matrix for ATP synthesis, and export of ATP out to fuel the cell. Cycles between the cytoplasmic-open state (c-state) and the matrix-open state (m-state): operates by the alternating access mechanism with a single substrate-binding site intermittently exposed to either the cytosolic (c-state) or matrix (m-state) side of the inner mitochondrial membrane. The protein is ADP,ATP carrier protein 3 (AAC3) of Saccharomyces cerevisiae (strain ATCC 204508 / S288c) (Baker's yeast).